The chain runs to 272 residues: Putative phosphoenolpyruvate synthase regulatory protein (272 aa).

152–159 (GVSRCGKT) is an ADP binding site.

It belongs to the pyruvate, phosphate/water dikinase regulatory protein family. PSRP subfamily.

The catalysed reaction is [pyruvate, water dikinase] + ADP = [pyruvate, water dikinase]-phosphate + AMP + H(+). The enzyme catalyses [pyruvate, water dikinase]-phosphate + phosphate + H(+) = [pyruvate, water dikinase] + diphosphate. In terms of biological role, bifunctional serine/threonine kinase and phosphorylase involved in the regulation of the phosphoenolpyruvate synthase (PEPS) by catalyzing its phosphorylation/dephosphorylation. The polypeptide is Putative phosphoenolpyruvate synthase regulatory protein (Pseudomonas putida (strain ATCC 700007 / DSM 6899 / JCM 31910 / BCRC 17059 / LMG 24140 / F1)).